The following is a 451-amino-acid chain: Tubulin gamma-1 chain (451 aa).

Serine 131 bears the Phosphoserine; by BRSK1 mark. Residue 142 to 148 coordinates GTP; the sequence is AGGTGSG.

This sequence belongs to the tubulin family. In terms of assembly, component of the gamma-tubulin ring complex (gTuRC) consisting of TUBGCP2, TUBGCP3, TUBGCP4, TUBGCP5 and TUBGCP6 and gamma-tubulin TUBG1 or TUBG2. TUBGCP2, TUBGCP3, TUBGCP4, TUBGCP5 and TUBGCP6 assemble in a 5:5:2:1:1 stoichiometry; each is associated with a gamma-tubulin, thereby arranging 14 gamma-tubulins in a helical manner. Gamma-tubulin at the first position is blocked by TUBGCP3 at the last position, allowing 13 protafilaments to grow into a microtubule. The gTuRC (via TUBGCP3 and TUBGCP6) interacts with ACTB and MZT1; the interactions form a luminal bridge that stabilizes the initial structure during complex assembly. The gTuRC (via TUBGCP2) interacts with MZT2A/MZT2B and CDK5RAP2 (via CM1 motif); the interactions play a role in gTuRC activation. Interacts with alpha-beta tubulin heterodimers; the interaction allows microtubules to nucleate from the gTuRC. Interacts with B9D2. Interacts with CDK5RAP2; the interaction is leading to centrosomal localization of TUBG1 and CDK5RAP2. Interacts with CIMAP3. Interacts with SAS6 and NUP62 at the centrosome. Interacts with EML3 (phosphorylated at 'Thr-881') and HAUS8. Interacts with DNM2; this interaction may participate in centrosome cohesion. Interacts with CCDC66. In terms of processing, phosphorylation at Ser-131 by BRSK1 regulates centrosome duplication, possibly by mediating relocation of gamma-tubulin and its associated proteins from the cytoplasm to the centrosome.

It is found in the cytoplasm. The protein resides in the cytoskeleton. The protein localises to the microtubule organizing center. It localises to the centrosome. Its subcellular location is the spindle. In terms of biological role, tubulin is the major constituent of microtubules, protein filaments consisting of alpha- and beta-tubulin heterodimers. Gamma-tubulin is a key component of the gamma-tubulin ring complex (gTuRC) which mediates microtubule nucleation. The gTuRC regulates the minus-end nucleation of alpha-beta tubulin heterodimers that grow into microtubule protafilaments, a critical step in centrosome duplication and spindle formation. The polypeptide is Tubulin gamma-1 chain (Canis lupus familiaris (Dog)).